Here is a 1233-residue protein sequence, read N- to C-terminus: Structural maintenance of chromosomes protein 1A (1233 aa).

32-39 (GPNGSGKS) provides a ligand contact to ATP. 2 coiled-coil regions span residues 104–124 (EYKI…LEKL) and 163–503 (ELAQ…KAEI). A compositionally biased stretch (basic and acidic residues) spans 284 to 293 (IKEKDSELNQ). Disordered stretches follow at residues 284–308 (IKEK…TSHK) and 348–369 (QEFE…TLEE). Residues Ser-358 and Ser-360 each carry the phosphoserine modification. The 115-residue stretch at 515-629 (VYGRLIDLCQ…DNVEDARRIA (115 aa)) folds into the SMC hinge domain. An N6-acetyllysine mark is found at Lys-648 and Lys-713. The stretch at 660–935 (KAKARRWDEK…RHNLLQACKM (276 aa)) forms a coiled coil. The interval 947–966 (MDDISQEEGSSQGEDSVSGS) is disordered. Residues 953 to 966 (EEGSSQGEDSVSGS) show a composition bias toward low complexity. Ser-957 carries the phosphoserine; by ATM modification. Ser-962 is modified (phosphoserine). At Ser-966 the chain carries Phosphoserine; by ATM and ATR. Position 970 is a phosphoserine (Ser-970). Positions 991-1068 (KDAQAEEEIK…FEQIKKERFD (78 aa)) form a coiled coil. Lys-1037 bears the N6-acetyllysine mark.

The protein belongs to the SMC family. SMC1 subfamily. Forms a heterodimer with SMC3 in cohesin complexes. Cohesin complexes are composed of the SMC1 (SMC1A or SMC1B) and SMC3 heterodimer attached via their SMC hinge domain, RAD21 which link them, and one STAG protein (STAG1, STAG2 or STAG3), which interacts with RAD21. In germ cell cohesin complexes, SMC1A is mutually exclusive with SMC1B. Interacts with BRCA1. Found in a complex with CDCA5, SMC3 and RAD21, PDS5A/SCC-112 and PDS5B/APRIN. Interacts with NDC80. Interacts with BRAT1. Found in a complex containing POLE and SMC3. Interacts with RPGR, STAG3 and SYCP2. The cohesin complex interacts with the cohesin loading complex subunits NIPBL/Scc2 (via HEAT repeats) and MAU2/Scc4. NIPBL directly contacts all members of the complex, RAD21, SMC1A/B, SMC3 and STAG1. In terms of processing, ubiquitinated by the DCX(DCAF15) complex, leading to its degradation. Post-translationally, phosphorylated by ATM upon ionizing radiation in a NBS1-dependent manner. Phosphorylated by ATR upon DNA methylation in a MSH2/MSH6-dependent manner. Phosphorylation of Ser-957 and Ser-966 activates it and is required for S-phase checkpoint activation.

It is found in the nucleus. Its subcellular location is the chromosome. The protein localises to the centromere. It localises to the kinetochore. Its function is as follows. Involved in chromosome cohesion during cell cycle and in DNA repair. Central component of cohesin complex. The cohesin complex is required for the cohesion of sister chromatids after DNA replication. The cohesin complex apparently forms a large proteinaceous ring within which sister chromatids can be trapped. At anaphase, the complex is cleaved and dissociates from chromatin, allowing sister chromatids to segregate. The cohesin complex may also play a role in spindle pole assembly during mitosis. Involved in DNA repair via its interaction with BRCA1 and its related phosphorylation by ATM, or via its phosphorylation by ATR. Works as a downstream effector both in the ATM/NBS1 branch and in the ATR/MSH2 branch of S-phase checkpoint. This is Structural maintenance of chromosomes protein 1A (SMC1A) from Homo sapiens (Human).